Consider the following 207-residue polypeptide: Large ribosomal subunit protein uL4 (207 aa).

Residues 49 to 79 form a disordered region; it reads HKVKSRGEVSGGGKKPWRQKGTGRARAGTSR.

It belongs to the universal ribosomal protein uL4 family. Part of the 50S ribosomal subunit.

Functionally, one of the primary rRNA binding proteins, this protein initially binds near the 5'-end of the 23S rRNA. It is important during the early stages of 50S assembly. It makes multiple contacts with different domains of the 23S rRNA in the assembled 50S subunit and ribosome. Forms part of the polypeptide exit tunnel. This Heliobacterium modesticaldum (strain ATCC 51547 / Ice1) protein is Large ribosomal subunit protein uL4.